The primary structure comprises 83 residues: RNA-binding protein Hfq (83 aa).

Positions 11-71 constitute a Sm domain; sequence DTFLNHVRKN…ISTIMPGHPV (61 aa).

It belongs to the Hfq family. In terms of assembly, homohexamer.

Its function is as follows. RNA chaperone that binds small regulatory RNA (sRNAs) and mRNAs to facilitate mRNA translational regulation in response to envelope stress, environmental stress and changes in metabolite concentrations. Also binds with high specificity to tRNAs. This is RNA-binding protein Hfq from Methylobacterium radiotolerans (strain ATCC 27329 / DSM 1819 / JCM 2831 / NBRC 15690 / NCIMB 10815 / 0-1).